A 326-amino-acid polypeptide reads, in one-letter code: Cytosolic sulfotransferase 12 (326 aa).

Lys-75 to Trp-80 is a binding site for 3'-phosphoadenylyl sulfate. The Proton acceptor role is filled by His-140. 3'-phosphoadenylyl sulfate-binding positions include Arg-162, Ser-170, Tyr-228, and Arg-290–Gly-292.

Belongs to the sulfotransferase 1 family. Dimer. Expressed in the aerial parts of seedlings, in roots, leaves and flowers. Not detected in stems and siliques.

It localises to the cytoplasm. Functionally, sulfotransferase that utilizes 3'-phospho-5'-adenylyl sulfate (PAPS) as sulfonate donor to catalyze the stereospecific sulfate conjugation of 24-epibrassinosteroids. Preferred substrates are 24-epicathasterone and 6-deoxo-24-epicathasterone. Low activity with 22-deoxy-24-epiteasterone. No activity with 24-epimers catasterone and brassinolide. Sulfonates salicylic acid. May be involved in detoxification. Enhances plant response to pathogen infection and contributes to long distance signaling in systemic acquired resistance (SAR). In Arabidopsis thaliana (Mouse-ear cress), this protein is Cytosolic sulfotransferase 12 (SOT12).